Reading from the N-terminus, the 196-residue chain is Lipoprotein signal peptidase (196 aa).

The tract at residues 1–24 (MAEAERIIGMPENPDVDGTDEGGS) is disordered. The next 3 helical transmembrane spans lie at 40–60 (ILALLSVAVVAYLLDLGSKML), 92–112 (IGEAFTVIFTIIATGVIVVIF), and 118–138 (LYSLPWAIALGLLLGGALGNL). Active-site residues include Asp155 and Asp169. The chain crosses the membrane as a helical span at residues 164-184 (VFNLADSAIVCGGILIVILSF).

The protein belongs to the peptidase A8 family.

The protein localises to the cell membrane. The catalysed reaction is Release of signal peptides from bacterial membrane prolipoproteins. Hydrolyzes -Xaa-Yaa-Zaa-|-(S,diacylglyceryl)Cys-, in which Xaa is hydrophobic (preferably Leu), and Yaa (Ala or Ser) and Zaa (Gly or Ala) have small, neutral side chains.. Its pathway is protein modification; lipoprotein biosynthesis (signal peptide cleavage). Its function is as follows. This protein specifically catalyzes the removal of signal peptides from prolipoproteins. The sequence is that of Lipoprotein signal peptidase from Streptomyces griseus subsp. griseus (strain JCM 4626 / CBS 651.72 / NBRC 13350 / KCC S-0626 / ISP 5235).